Here is an 817-residue protein sequence, read N- to C-terminus: General transcription factor 3C polypeptide 4 (817 aa).

Residue M1 is modified to N-acetylmethionine. Residues M1–S40 are disordered. Residue K221 forms a Glycyl lysine isopeptide (Lys-Gly) (interchain with G-Cter in SUMO2) linkage. Phosphoserine is present on residues S600 and S607. Residues L603–E658 form a disordered region. K624 is covalently cross-linked (Glycyl lysine isopeptide (Lys-Gly) (interchain with G-Cter in SUMO2)). Residue S647 is modified to Phosphoserine.

This sequence belongs to the TFIIIC subunit 4 family. In terms of assembly, part of the TFIIIC subcomplex TFIIIC2, consisting of six subunits, GTF3C1, GTF3C2, GTF3C3, GTF3C4, GTF3C5 and GTF3C6. Interacts with BRF1, GTF3C1, GTF3C2, GTF3C5, GTF3C6, POLR3C and POLR3F.

It localises to the nucleus. It carries out the reaction L-lysyl-[protein] + acetyl-CoA = N(6)-acetyl-L-lysyl-[protein] + CoA + H(+). Functionally, essential for RNA polymerase III to make a number of small nuclear and cytoplasmic RNAs, including 5S RNA, tRNA, and adenovirus-associated (VA) RNA of both cellular and viral origin. Has histone acetyltransferase activity (HAT) with unique specificity for free and nucleosomal H3. May cooperate with GTF3C5 in facilitating the recruitment of TFIIIB and RNA polymerase through direct interactions with BRF1, POLR3C and POLR3F. May be localized close to the A box. In Mus musculus (Mouse), this protein is General transcription factor 3C polypeptide 4 (Gtf3c4).